The primary structure comprises 277 residues: MKLLDFEVGINHPFFLIAGPCVIESEALALETATYLKRVTEDLGINFIYKSSYDKANRTSTNSFRGLGVKEGLRILQKVKDEVGVPVLTDVHEDTPLSEVASVVDMMQTPAFLVRQTNFIQNVCKQGIPVNIKKGQFQAPWDIGNVVNKAYETGNRLITICERGTSFGYNTLISDMRGLSTMRSTGCPIVFDATHSVQQPGGNGLTSGGQREMVPVVARAAIGVGVSGFFMETHPNPNEAFSDGPNMVPIDKIDELLKTLQELDAVTKKHGFLEDSL.

This sequence belongs to the KdsA family.

It localises to the cytoplasm. The catalysed reaction is D-arabinose 5-phosphate + phosphoenolpyruvate + H2O = 3-deoxy-alpha-D-manno-2-octulosonate-8-phosphate + phosphate. It participates in carbohydrate biosynthesis; 3-deoxy-D-manno-octulosonate biosynthesis; 3-deoxy-D-manno-octulosonate from D-ribulose 5-phosphate: step 2/3. Its pathway is bacterial outer membrane biogenesis; lipopolysaccharide biosynthesis. The protein is 2-dehydro-3-deoxyphosphooctonate aldolase of Vesicomyosocius okutanii subsp. Calyptogena okutanii (strain HA).